We begin with the raw amino-acid sequence, 334 residues long: Glyceraldehyde-3-phosphate dehydrogenase (334 aa).

Residues 10–11, aspartate 33, lysine 77, and threonine 119 each bind NAD(+); that span reads RI. D-glyceraldehyde 3-phosphate is bound by residues 149–151, threonine 180, 209–210, and arginine 232; these read SCT and TG. Cysteine 150 functions as the Nucleophile in the catalytic mechanism. Asparagine 314 is a binding site for NAD(+).

This sequence belongs to the glyceraldehyde-3-phosphate dehydrogenase family. As to quaternary structure, homotetramer.

It is found in the cytoplasm. The enzyme catalyses D-glyceraldehyde 3-phosphate + phosphate + NAD(+) = (2R)-3-phospho-glyceroyl phosphate + NADH + H(+). Its pathway is carbohydrate degradation; glycolysis; pyruvate from D-glyceraldehyde 3-phosphate: step 1/5. Its function is as follows. Catalyzes the oxidative phosphorylation of glyceraldehyde 3-phosphate (G3P) to 1,3-bisphosphoglycerate (BPG) using the cofactor NAD. The first reaction step involves the formation of a hemiacetal intermediate between G3P and a cysteine residue, and this hemiacetal intermediate is then oxidized to a thioester, with concomitant reduction of NAD to NADH. The reduced NADH is then exchanged with the second NAD, and the thioester is attacked by a nucleophilic inorganic phosphate to produce BPG. The chain is Glyceraldehyde-3-phosphate dehydrogenase (gap) from Chlamydia trachomatis serovar D (strain ATCC VR-885 / DSM 19411 / UW-3/Cx).